A 390-amino-acid polypeptide reads, in one-letter code: MSKDSPLIALVAGEISGDILGAGLINALKIHYPNARFIGVAGPQMIQAGCQTLFDMEELAVMGLAEVVKHLPRLLKRRKQVIQTMLQQQPDIFIGIDAPDFNLTIEQKLKAKGITTIHYVSPSVWAWRQDRIHKIKRATNLVLAFLPFEKAFYDRFNVACRFIGHTMADAIALKPNRTEACQILNIDENQRYLAILAGSRASEVDFLAEPFLKAALLLKQKYPDLQCLVPLVNQQRIQQFEQIKARVAPSLPVKILKGNARQAMIAADATLLASGTAALEAMLCKSPMVVGYKLKPTSYWLAKRLIKTKYISLPNLLADDMLVPELIQDECNPENLAWYLGNYLADDIDNKKQQNELKQRFTDLHKMIQCDADSKAAQAVIDLLANSDDQ.

The protein belongs to the LpxB family.

It carries out the reaction a lipid X + a UDP-2-N,3-O-bis[(3R)-3-hydroxyacyl]-alpha-D-glucosamine = a lipid A disaccharide + UDP + H(+). The protein operates within bacterial outer membrane biogenesis; LPS lipid A biosynthesis. Functionally, condensation of UDP-2,3-diacylglucosamine and 2,3-diacylglucosamine-1-phosphate to form lipid A disaccharide, a precursor of lipid A, a phosphorylated glycolipid that anchors the lipopolysaccharide to the outer membrane of the cell. The polypeptide is Lipid-A-disaccharide synthase (Haemophilus ducreyi (strain 35000HP / ATCC 700724)).